The following is a 133-amino-acid chain: UPF0134 protein MPN_151 (133 aa).

It belongs to the UPF0134 family.

This chain is UPF0134 protein MPN_151, found in Mycoplasma pneumoniae (strain ATCC 29342 / M129 / Subtype 1) (Mycoplasmoides pneumoniae).